A 403-amino-acid chain; its full sequence is Poly(rC)-binding protein 4 (403 aa).

KH domains lie at 17–67 (TLTL…TITG), 101–154 (PVTL…TVSG), and 241–293 (TSSQ…TITG).

It is found in the cytoplasm. Single-stranded nucleic acid binding protein that binds preferentially to oligo dC. The chain is Poly(rC)-binding protein 4 (PCBP4) from Homo sapiens (Human).